The sequence spans 306 residues: Sulfate adenylyltransferase subunit 2 (306 aa).

The protein belongs to the PAPS reductase family. CysD subfamily. In terms of assembly, heterodimer composed of CysD, the smaller subunit, and CysN.

It carries out the reaction sulfate + ATP + H(+) = adenosine 5'-phosphosulfate + diphosphate. Its pathway is sulfur metabolism; hydrogen sulfide biosynthesis; sulfite from sulfate: step 1/3. In terms of biological role, with CysN forms the ATP sulfurylase (ATPS) that catalyzes the adenylation of sulfate producing adenosine 5'-phosphosulfate (APS) and diphosphate, the first enzymatic step in sulfur assimilation pathway. APS synthesis involves the formation of a high-energy phosphoric-sulfuric acid anhydride bond driven by GTP hydrolysis by CysN coupled to ATP hydrolysis by CysD. The protein is Sulfate adenylyltransferase subunit 2 of Brucella anthropi (strain ATCC 49188 / DSM 6882 / CCUG 24695 / JCM 21032 / LMG 3331 / NBRC 15819 / NCTC 12168 / Alc 37) (Ochrobactrum anthropi).